A 234-amino-acid polypeptide reads, in one-letter code: Lipoprotein-releasing system ATP-binding protein LolD (234 aa).

Residues Leu7 to Ala233 form the ABC transporter domain. Gly43–Ser50 is a binding site for ATP.

Belongs to the ABC transporter superfamily. Lipoprotein translocase (TC 3.A.1.125) family. The complex is composed of two ATP-binding proteins (LolD) and two transmembrane proteins (LolC and LolE).

The protein localises to the cell inner membrane. Its function is as follows. Part of the ABC transporter complex LolCDE involved in the translocation of mature outer membrane-directed lipoproteins, from the inner membrane to the periplasmic chaperone, LolA. Responsible for the formation of the LolA-lipoprotein complex in an ATP-dependent manner. The chain is Lipoprotein-releasing system ATP-binding protein LolD from Yersinia pestis bv. Antiqua (strain Antiqua).